The chain runs to 375 residues: Trichodiene synthase (375 aa).

It belongs to the trichodiene synthase family.

It catalyses the reaction (2E,6E)-farnesyl diphosphate = trichodiene + diphosphate. It functions in the pathway sesquiterpene biosynthesis; trichothecene biosynthesis. Its function is as follows. TS is a member of the terpene cyclase group of enzymes. It catalyzes the isomerization and cyclization of farnesyl pyro-phosphate to form trichodiene, the first cyclic intermediate in the biosynthetic pathway for trichothecenes. It serves to branch trichothecene biosynthesis from the isoprenoid pathway. The sequence is that of Trichodiene synthase (TRI5) from Gibberella zeae (strain ATCC MYA-4620 / CBS 123657 / FGSC 9075 / NRRL 31084 / PH-1) (Wheat head blight fungus).